We begin with the raw amino-acid sequence, 261 residues long: uncharacterized protein (261 aa).

Residues 1–22 (MRYLKKVTIYISLLILTIFIGG) form the signal peptide. Residue C23 is the site of N-palmitoyl cysteine attachment. Residue C23 is the site of S-diacylglycerol cysteine attachment.

This sequence belongs to the staphylococcal tandem lipoprotein family.

The protein localises to the cell membrane. This is an uncharacterized protein from Staphylococcus epidermidis (strain ATCC 35984 / DSM 28319 / BCRC 17069 / CCUG 31568 / BM 3577 / RP62A).